A 582-amino-acid polypeptide reads, in one-letter code: ATP-dependent lipid A-core flippase (582 aa).

A run of 5 helical transmembrane segments spans residues 27–47, 69–89, 142–162, 165–185, and 249–269; these read LIVA…MISL, LIIF…TYCL, ALVS…LMFY, WQLS…IGVV, and AAAN…VLYL. In terms of domain architecture, ABC transmembrane type-1 spans 28–310; that stretch reads IVAVIALVIN…LTNVTSQFQR (283 aa). Positions 342 to 578 constitute an ABC transporter domain; sequence VSVKDVSFTY…NGAYAQLHRI (237 aa). 376-383 is an ATP binding site; the sequence is GRSGSGKS.

The protein belongs to the ABC transporter superfamily. Lipid exporter (TC 3.A.1.106) family. As to quaternary structure, homodimer.

The protein resides in the cell inner membrane. The enzyme catalyses ATP + H2O + lipid A-core oligosaccharideSide 1 = ADP + phosphate + lipid A-core oligosaccharideSide 2.. Functionally, involved in lipopolysaccharide (LPS) biosynthesis. Translocates lipid A-core from the inner to the outer leaflet of the inner membrane. Transmembrane domains (TMD) form a pore in the inner membrane and the ATP-binding domain (NBD) is responsible for energy generation. This chain is ATP-dependent lipid A-core flippase, found in Vibrio parahaemolyticus serotype O3:K6 (strain RIMD 2210633).